Consider the following 204-residue polypeptide: Recombination protein RecR (204 aa).

The C4-type zinc-finger motif lies at 61-76; that stretch reads CARCNTFSETQICSTC. One can recognise a Toprim domain in the interval 84–183; sequence SLLCIVETPA…KVTRIARGIP (100 aa).

Belongs to the RecR family.

May play a role in DNA repair. It seems to be involved in an RecBC-independent recombinational process of DNA repair. It may act with RecF and RecO. The sequence is that of Recombination protein RecR from Polynucleobacter asymbioticus (strain DSM 18221 / CIP 109841 / QLW-P1DMWA-1) (Polynucleobacter necessarius subsp. asymbioticus).